The sequence spans 41 residues: Photosystem I reaction center subunit IX (41 aa).

The helical transmembrane segment at 7–27 (YLSTAPVLLTLWMTFTAGFII) threads the bilayer.

It belongs to the PsaJ family.

Its subcellular location is the plastid. The protein resides in the chloroplast thylakoid membrane. Its function is as follows. May help in the organization of the PsaE and PsaF subunits. This Thalassiosira pseudonana (Marine diatom) protein is Photosystem I reaction center subunit IX.